The primary structure comprises 845 residues: Alanine--tRNA ligase (845 aa).

Zn(2+) contacts are provided by H552, H556, C653, and H657.

This sequence belongs to the class-II aminoacyl-tRNA synthetase family. Zn(2+) serves as cofactor.

It localises to the cytoplasm. The catalysed reaction is tRNA(Ala) + L-alanine + ATP = L-alanyl-tRNA(Ala) + AMP + diphosphate. Its function is as follows. Catalyzes the attachment of alanine to tRNA(Ala) in a two-step reaction: alanine is first activated by ATP to form Ala-AMP and then transferred to the acceptor end of tRNA(Ala). Also edits incorrectly charged Ser-tRNA(Ala) and Gly-tRNA(Ala) via its editing domain. This Campylobacter fetus subsp. fetus (strain 82-40) protein is Alanine--tRNA ligase.